Reading from the N-terminus, the 686-residue chain is ATP-dependent zinc metalloprotease FtsH 1 (686 aa).

At M1–R33 the chain is on the cytoplasmic side. The chain crosses the membrane as a helical span at residues S34 to I54. The Periplasmic segment spans residues K55–W164. A helical transmembrane segment spans residues V165–F185. Over M186–G686 the chain is Cytoplasmic. G257–T264 provides a ligand contact to ATP. H479 contacts Zn(2+). E480 is a catalytic residue. Zn(2+)-binding residues include H483 and D555. The segment at Y661–G686 is disordered. Over residues T670–G686 the composition is skewed to polar residues.

This sequence in the central section; belongs to the AAA ATPase family. It in the C-terminal section; belongs to the peptidase M41 family. In terms of assembly, homohexamer. Requires Zn(2+) as cofactor.

It is found in the cell inner membrane. In terms of biological role, acts as a processive, ATP-dependent zinc metallopeptidase for both cytoplasmic and membrane proteins. Plays a role in the quality control of integral membrane proteins. The sequence is that of ATP-dependent zinc metalloprotease FtsH 1 from Salinibacter ruber (strain M8).